We begin with the raw amino-acid sequence, 205 residues long: 7-methyl-GTP pyrophosphatase (205 aa).

The active-site Proton acceptor is the Asp-79.

This sequence belongs to the Maf family. YceF subfamily. Requires a divalent metal cation as cofactor.

It localises to the cytoplasm. It catalyses the reaction N(7)-methyl-GTP + H2O = N(7)-methyl-GMP + diphosphate + H(+). In terms of biological role, nucleoside triphosphate pyrophosphatase that hydrolyzes 7-methyl-GTP (m(7)GTP). May have a dual role in cell division arrest and in preventing the incorporation of modified nucleotides into cellular nucleic acids. This chain is 7-methyl-GTP pyrophosphatase, found in Paraburkholderia xenovorans (strain LB400).